Reading from the N-terminus, the 78-residue chain is UPF0335 protein RrIowa_0193 (78 aa).

Belongs to the UPF0335 family.

This chain is UPF0335 protein RrIowa_0193, found in Rickettsia rickettsii (strain Iowa).